The primary structure comprises 601 residues: Keratin, type II cytoskeletal 5 (601 aa).

Positions 1–168 (MSRQSTVSFR…DPTIQRVRTE (168 aa)) are head. Phosphoserine occurs at positions 5, 8, 16, and 21. At Thr24 the chain carries Phosphothreonine; by CDK1. Phosphoserine occurs at positions 26, 36, 50, 64, 71, and 75. Thr152 is subject to Phosphothreonine; by CDK1. Thr167 bears the Phosphothreonine; by AURKB mark. Residues 169 to 204 (EREQIKTLNNKFASFIDKVRFLEQQNKVLDTKWALL) form a coil 1A region. Residues 169–482 (EREQIKTLNN…KLLEGEECRL (314 aa)) enclose the IF rod domain. The interval 205–223 (QEQGTKTVRQNLEPLLEQY) is linker 1. Residues 224-316 (INNLRRQLDG…FFDAELSQMQ (93 aa)) form a coil 1B region. The linker 12 stretch occupies residues 317-339 (THVSDTSVVLSMDNNRSLDLDSI). Residues 340–478 (IAEVKAQYED…ATYRKLLEGE (139 aa)) form a coil 2 region. A tail region spans residues 479-601 (ECRLSGEGVG…TSSSRKSFKS (123 aa)). The tract at residues 576–601 (FGSGGGSSSSVKFVSTTSSSRKSFKS) is disordered. Positions 583-601 (SSSVKFVSTTSSSRKSFKS) are enriched in low complexity.

Belongs to the intermediate filament family. Heterodimer of a type I and a type II keratin. Heterodimer with type I keratin KRT25 leading to the formation of keratin intermediate filament (KIF) network. Forms a heterodimer (via 2B domains) with KRT14 (via 2B domains). Interacts with TCHP. Interacts with EPPK1. Interacts with AMELX. Interacts with PKP1 (via N-terminus) and PKP2. In terms of processing, phosphorylated by CDK1, AURKB and Rho-kinase, phosphorylation is regulated by the cell cycle. Thr-24 phosphorylation, mediated by CDK1, peaks during prometaphase or metaphase cells with phosphorylated filamentous structures evident throughout the cytoplasm early mitosis. CDK1 phosphorylates Thr-24 in mitotic cells at the site of injury. O-glycosylated.

The protein localises to the cytoplasm. In terms of biological role, required for the formation of keratin intermediate filaments in the basal epidermis and maintenance of the skin barrier in response to mechanical stress. Regulates the recruitment of Langerhans cells to the epidermis, potentially by modulation of the abundance of macrophage chemotactic cytokines, macrophage inflammatory cytokines and CTNND1 localization in keratinocytes. This is Keratin, type II cytoskeletal 5 from Bos taurus (Bovine).